Reading from the N-terminus, the 287-residue chain is Formamidopyrimidine-DNA glycosylase (287 aa).

Proline 2 functions as the Schiff-base intermediate with DNA in the catalytic mechanism. The active-site Proton donor is glutamate 3. Lysine 58 acts as the Proton donor; for beta-elimination activity in catalysis. DNA is bound by residues histidine 104, arginine 123, and arginine 166. Residues 251 to 287 (RVYDREGQPCPTPGCKGMIGREVQAGRSTFFCPVCQV) form an FPG-type zinc finger. Residue arginine 277 is the Proton donor; for delta-elimination activity of the active site.

It belongs to the FPG family. In terms of assembly, monomer. It depends on Zn(2+) as a cofactor.

The catalysed reaction is Hydrolysis of DNA containing ring-opened 7-methylguanine residues, releasing 2,6-diamino-4-hydroxy-5-(N-methyl)formamidopyrimidine.. It carries out the reaction 2'-deoxyribonucleotide-(2'-deoxyribose 5'-phosphate)-2'-deoxyribonucleotide-DNA = a 3'-end 2'-deoxyribonucleotide-(2,3-dehydro-2,3-deoxyribose 5'-phosphate)-DNA + a 5'-end 5'-phospho-2'-deoxyribonucleoside-DNA + H(+). Its function is as follows. Involved in base excision repair of DNA damaged by oxidation or by mutagenic agents. Acts as a DNA glycosylase that recognizes and removes damaged bases. Has a preference for oxidized purines, such as 7,8-dihydro-8-oxoguanine (8-oxoG). Has AP (apurinic/apyrimidinic) lyase activity and introduces nicks in the DNA strand. Cleaves the DNA backbone by beta-delta elimination to generate a single-strand break at the site of the removed base with both 3'- and 5'-phosphates. In Caulobacter sp. (strain K31), this protein is Formamidopyrimidine-DNA glycosylase.